The following is a 144-amino-acid chain: Transcription antitermination protein NusB (144 aa).

The protein belongs to the NusB family.

Functionally, involved in transcription antitermination. Required for transcription of ribosomal RNA (rRNA) genes. Binds specifically to the boxA antiterminator sequence of the ribosomal RNA (rrn) operons. This chain is Transcription antitermination protein NusB, found in Haemophilus influenzae (strain PittGG).